The following is a 365-amino-acid chain: Putative agmatine deiminase (365 aa).

Cys-356 serves as the catalytic Amidino-cysteine intermediate.

It belongs to the agmatine deiminase family.

The enzyme catalyses agmatine + H2O = N-carbamoylputrescine + NH4(+). The protein is Putative agmatine deiminase of Latilactobacillus sakei subsp. sakei (strain 23K) (Lactobacillus sakei subsp. sakei).